We begin with the raw amino-acid sequence, 496 residues long: MPNQHMEELNDQQIVRREKMAALAEQGIDPFGKRFERTATSGQLKEKYADKTKEELHEINETATIAGRLMTKRGKGKVGFAHIQDRDGQIQIYVRKDAVGEENYEIFKKADLGDFLGVEGEVMRTDMGELSIKATHITHLSKALRPLPEKFHGLSDIETIYRKRYLDLISNRESFDRFVTRSKIISEIRRYLDAQGFLEVETPVLHNEAGGAAAKPFITHHNAQNIDMVLRIALELHLKRLIVGGMERVYEIGRIFRNEGMDATHNPEFTMIEVYQAYADFHDIMDLTEGIIQHAAKAVKGDGPVNYQGTEIKINEPFKRIHMVDAIKEITGVDFWQDMTFEEAVALANEKHVPVEKHYTEVGQIINAFFEEFVEETLTQPTFVYGHPVAVSPLAKKNPEDPRFTDRFELFIMTKEYGNAYSELNDPIDQLSRFEAQAAAKELGDDEATGIDYDYVEALEYGMPPTGGLGIGIDRLCMLLTDTTTIRDVLLFPTMK.

Mg(2+)-binding residues include Glu-409 and Glu-416.

This sequence belongs to the class-II aminoacyl-tRNA synthetase family. In terms of assembly, homodimer. It depends on Mg(2+) as a cofactor.

The protein localises to the cytoplasm. It catalyses the reaction tRNA(Lys) + L-lysine + ATP = L-lysyl-tRNA(Lys) + AMP + diphosphate. The sequence is that of Lysine--tRNA ligase from Streptococcus thermophilus (strain ATCC BAA-491 / LMD-9).